Consider the following 100-residue polypeptide: Urease subunit gamma (100 aa).

This sequence belongs to the urease gamma subunit family. In terms of assembly, heterotrimer of UreA (gamma), UreB (beta) and UreC (alpha) subunits. Three heterotrimers associate to form the active enzyme.

It is found in the cytoplasm. It carries out the reaction urea + 2 H2O + H(+) = hydrogencarbonate + 2 NH4(+). It participates in nitrogen metabolism; urea degradation; CO(2) and NH(3) from urea (urease route): step 1/1. This is Urease subunit gamma from Actinobacillus pleuropneumoniae (Haemophilus pleuropneumoniae).